Reading from the N-terminus, the 528-residue chain is GMP synthase [glutamine-hydrolyzing] (528 aa).

The Glutamine amidotransferase type-1 domain maps to 13–204 (SILILDFGSQ…VYSISKCKAD (192 aa)). The Nucleophile role is filled by cysteine 90. Catalysis depends on residues histidine 178 and glutamate 180. The GMPS ATP-PPase domain occupies 205–403 (WNTETFLEET…LGLPDEIIKR (199 aa)). 232-238 (SGGVDSS) contacts ATP.

Homodimer.

It carries out the reaction XMP + L-glutamine + ATP + H2O = GMP + L-glutamate + AMP + diphosphate + 2 H(+). It participates in purine metabolism; GMP biosynthesis; GMP from XMP (L-Gln route): step 1/1. Functionally, catalyzes the synthesis of GMP from XMP. This Prochlorococcus marinus (strain MIT 9515) protein is GMP synthase [glutamine-hydrolyzing].